The sequence spans 170 residues: Tubulin polymerization-promoting protein family member 2 (170 aa).

The disordered stretch occupies residues 127–170; sequence TGTHKERFDESGKGKGIAGREEMTDNTGYVSGYKGSGTYDKKTK. The segment covering 129 to 149 has biased composition (basic and acidic residues); the sequence is THKERFDESGKGKGIAGREEM.

Belongs to the TPPP family. As to expression, expressed in spermatids. Detected in liver cancer (at protein level).

It is found in the cytoplasm. The protein resides in the cytosol. The protein localises to the cell projection. It localises to the cilium. Its subcellular location is the flagellum. Probable regulator of microtubule dynamics required for sperm motility. In contrast to other members of the family, has no microtubule bundling activity. This Homo sapiens (Human) protein is Tubulin polymerization-promoting protein family member 2.